The chain runs to 31 residues: MPTITSYFGFLLAASTITTALFIGLSKIRLI.

Residues 4–26 traverse the membrane as a helical segment; the sequence is ITSYFGFLLAASTITTALFIGLS.

Belongs to the PetL family. As to quaternary structure, the 4 large subunits of the cytochrome b6-f complex are cytochrome b6, subunit IV (17 kDa polypeptide, PetD), cytochrome f and the Rieske protein, while the 4 small subunits are PetG, PetL, PetM and PetN. The complex functions as a dimer.

It localises to the plastid. It is found in the chloroplast thylakoid membrane. Component of the cytochrome b6-f complex, which mediates electron transfer between photosystem II (PSII) and photosystem I (PSI), cyclic electron flow around PSI, and state transitions. PetL is important for photoautotrophic growth as well as for electron transfer efficiency and stability of the cytochrome b6-f complex. This chain is Cytochrome b6-f complex subunit 6, found in Acorus calamus (Sweet flag).